A 354-amino-acid chain; its full sequence is MEKRIVCLAGDGVGPEVMESAKEVLHMVERLYGHHFHLQDEYFGGVAIDLTGQPLPQRTLAACLASDAVLLGAVGGPRWDSAKERPEKGLLALRKGLGVFANVRPVTVESATAHLSPLKNADEIDFVVVRELTGGIYFSYPKERTEEVATDTLTYHRHEIERIVSYAFQLANKRKKKVTSIDKANVLESSKLWRTVTEEVALRYPNVEVEHILVDAAAMELIRNPGRFDVIVTENLFGDILSDEASVLAGSLGMLPSASHAEKGPSLYEPIHGSAPDIAGKNKANPIAMMRSVAMMLGQSFGLTREGYAIEEAVSAVLKSGKCTADIGGTETTTSFTKAVIQEMEEQALVGRGR.

An NAD(+)-binding site is contributed by 76–87 (GPRWDSAKERPE). The substrate site is built by arginine 94, arginine 104, arginine 130, and aspartate 215. The Mg(2+) site is built by aspartate 215, aspartate 239, and aspartate 243. Residue 273–285 (GSAPDIAGKNKAN) participates in NAD(+) binding.

This sequence belongs to the isocitrate and isopropylmalate dehydrogenases family. LeuB type 1 subfamily. In terms of assembly, homodimer. The cofactor is Mg(2+). It depends on Mn(2+) as a cofactor.

It localises to the cytoplasm. The catalysed reaction is (2R,3S)-3-isopropylmalate + NAD(+) = 4-methyl-2-oxopentanoate + CO2 + NADH. It participates in amino-acid biosynthesis; L-leucine biosynthesis; L-leucine from 3-methyl-2-oxobutanoate: step 3/4. Functionally, catalyzes the oxidation of 3-carboxy-2-hydroxy-4-methylpentanoate (3-isopropylmalate) to 3-carboxy-4-methyl-2-oxopentanoate. The product decarboxylates to 4-methyl-2 oxopentanoate. This Bacillus cereus (strain ATCC 14579 / DSM 31 / CCUG 7414 / JCM 2152 / NBRC 15305 / NCIMB 9373 / NCTC 2599 / NRRL B-3711) protein is 3-isopropylmalate dehydrogenase.